A 215-amino-acid polypeptide reads, in one-letter code: UPF0323 lipoprotein HP_0232 (215 aa).

A signal peptide spans 1–27; it reads MKKPYRKISDYAIVGGLSALVMVSIVG. Cys-28 carries N-palmitoyl cysteine lipidation. Cys-28 carries the S-diacylglycerol cysteine lipid modification. Polar residues predominate over residues 158 to 169; the sequence is QRTYKSPQAYQR. A disordered region spans residues 158 to 215; sequence QRTYKSPQAYQRSQNSFSKSAPSASSMGGASKGQSGFFGSSRPTSSPAVSSGTRGFNS. The segment covering 170 to 208 has biased composition (low complexity); sequence SQNSFSKSAPSASSMGGASKGQSGFFGSSRPTSSPAVSS.

It belongs to the UPF0323 family.

The protein localises to the cell membrane. The chain is UPF0323 lipoprotein HP_0232 from Helicobacter pylori (strain ATCC 700392 / 26695) (Campylobacter pylori).